The chain runs to 361 residues: Mitochondrial import receptor subunit TOM40 homolog (361 aa).

Over residues 1 to 10 the composition is skewed to low complexity; that stretch reads MGNVLAASSP. The disordered stretch occupies residues 1–71; sequence MGNVLAASSP…AASAGGTADD (71 aa). Positions 11–36 are enriched in pro residues; the sequence is PAGPPPPPAPPLVGLPPPPPSPPGFT. Positions 40-52 are enriched in gly residues; that stretch reads LGGGLGAGAGTGR. A compositionally biased stretch (low complexity) spans 59–71; it reads GTAAASAGGTADD.

Belongs to the Tom40 family. As to quaternary structure, forms part of the preprotein translocase complex of the outer mitochondrial membrane (TOM complex) which consists of at least 7 different proteins (TOMM5, TOMM6, TOMM7, TOMM20, TOMM22, TOMM40 and TOMM70). Interacts with mitochondrial targeting sequences. Interacts with TIMM29; linking the TIM22 complex to the TOM complex. Forms a complex with BCAP31 (via C-terminus) which mediates the translocation of components of the mitochondrial membrane respiratory chain NADH dehydrogenase (Complex I) from the cytosol to the mitochondria. Interacts (via N-terminus) with CYP1A1 (via mitochondrial targeting signal); this interaction is required for CYP1A1 translocation across the mitochondrial outer membrane.

It localises to the mitochondrion outer membrane. Functionally, channel-forming protein essential for import of protein precursors into mitochondria. Plays a role in the assembly of the mitochondrial membrane respiratory chain NADH dehydrogenase (Complex I) by forming a complex with BCAP31 and mediating the translocation of Complex I components from the cytosol to the mitochondria. The polypeptide is Mitochondrial import receptor subunit TOM40 homolog (Bos taurus (Bovine)).